The chain runs to 157 residues: Endoribonuclease YbeY (157 aa).

Zn(2+) contacts are provided by H111, H115, and H121.

It belongs to the endoribonuclease YbeY family. Zn(2+) is required as a cofactor.

It localises to the cytoplasm. Its function is as follows. Single strand-specific metallo-endoribonuclease involved in late-stage 70S ribosome quality control and in maturation of the 3' terminus of the 16S rRNA. This is Endoribonuclease YbeY from Pseudomonas entomophila (strain L48).